Consider the following 492-residue polypeptide: Peptidyl-prolyl cis-trans isomerase-like 4 (492 aa).

The PPIase cyclophilin-type domain maps to 1 to 161 (MAVLLETTLG…QDIRINHTVI (161 aa)). The segment at 167-188 (DDPPDLLIPDRSPEPTKEQLDS) is disordered. The segment covering 177 to 187 (RSPEPTKEQLD) has biased composition (basic and acidic residues). At Ser-178 the chain carries Phosphoserine. Thr-182 carries the post-translational modification Phosphothreonine. Glycyl lysine isopeptide (Lys-Gly) (interchain with G-Cter in SUMO2) cross-links involve residues Lys-201, Lys-212, and Lys-218. The 79-residue stretch at 240-318 (NVLFVCKLNP…RRIHVDFSQS (79 aa)) folds into the RRM domain. Glycyl lysine isopeptide (Lys-Gly) (interchain with G-Cter in SUMO2) cross-links involve residues Lys-321 and Lys-362. Disordered stretches follow at residues 368–409 (DEQG…NPNQ) and 423–492 (EESC…SKYR). A compositionally biased stretch (basic residues) spans 377–390 (SHSHTSKKHKKKTR). Residue Ser-393 is modified to Phosphoserine. A Glycyl lysine isopeptide (Lys-Gly) (interchain with G-Cter in SUMO2) cross-link involves residue Lys-405. Residues 426–436 (CWEKQKNEKRD) show a composition bias toward basic and acidic residues. Lys-460 is covalently cross-linked (Glycyl lysine isopeptide (Lys-Gly) (interchain with G-Cter in SUMO2)). Ser-471 carries the post-translational modification Phosphoserine. Residues 473–485 (KRDRSRSPKKSKA) show a composition bias toward basic residues.

This sequence belongs to the cyclophilin-type PPIase family. PPIL4 subfamily.

The protein localises to the nucleus. It carries out the reaction [protein]-peptidylproline (omega=180) = [protein]-peptidylproline (omega=0). Functionally, PPIases accelerate the folding of proteins. It catalyzes the cis-trans isomerization of proline imidic peptide bonds in oligopeptides. This is Peptidyl-prolyl cis-trans isomerase-like 4 (Ppil4) from Mus musculus (Mouse).